Reading from the N-terminus, the 555-residue chain is Tau-cadinol synthase (555 aa).

Positions 270, 307, 311, 448, and 451 each coordinate (2E,6E)-farnesyl diphosphate. Mg(2+) is bound by residues Asp-307 and Asp-311. The short motif at 307-311 (DDTYD) is the DDXXD motif element. Positions 451, 455, and 459 each coordinate Mg(2+).

Belongs to the terpene synthase family. The cofactor is Mg(2+).

It catalyses the reaction (2E,6E)-farnesyl diphosphate + H2O = tau-cadinol + diphosphate. The enzyme catalyses (2E,6E)-farnesyl diphosphate = (+)-gamma-cadinene + diphosphate. It participates in secondary metabolite biosynthesis; terpenoid biosynthesis. Functionally, sesquiterpene synthase that catalyzes the formation of sesquiterpenes and sesquiterpenoid alcohols. Converts farnesyl diphosphate (FPP) to tau-cadinol. Converts FPP to gamma-cadinene. Tau-cadinol is the major product. This Lavandula angustifolia (Lavender) protein is Tau-cadinol synthase.